Reading from the N-terminus, the 306-residue chain is Pantothenate kinase (306 aa).

Residue 91–98 coordinates ATP; that stretch reads GSVAVGKS.

It belongs to the prokaryotic pantothenate kinase family.

Its subcellular location is the cytoplasm. The catalysed reaction is (R)-pantothenate + ATP = (R)-4'-phosphopantothenate + ADP + H(+). Its pathway is cofactor biosynthesis; coenzyme A biosynthesis; CoA from (R)-pantothenate: step 1/5. This chain is Pantothenate kinase, found in Streptococcus pyogenes serotype M49 (strain NZ131).